Reading from the N-terminus, the 220-residue chain is Iron-sulfur cluster repair protein YtfE (220 aa).

It belongs to the RIC family. YtfE subfamily. Homodimer.

It is found in the cytoplasm. Functionally, di-iron-containing protein involved in the repair of iron-sulfur clusters damaged by oxidative and nitrosative stress conditions. The chain is Iron-sulfur cluster repair protein YtfE from Salmonella typhimurium (strain LT2 / SGSC1412 / ATCC 700720).